A 286-amino-acid polypeptide reads, in one-letter code: Protein METABOLIC NETWORK MODULATOR 1 (286 aa).

The segment covering 1–10 (MEKESHEENN) has biased composition (basic and acidic residues). Disordered stretches follow at residues 1–60 (MEKE…DDEA), 123–146 (VMHHDGSAKRGRKSRFREKRGSGV), and 181–204 (GGERVPIDHSPMQTETGSQASGAS). Positions 20–29 (KRKRGRPRKQ) are enriched in basic residues. A compositionally biased stretch (basic and acidic residues) spans 30–39 (LKLESNEHSL). Over residues 131–140 (KRGRKSRFRE) the composition is skewed to basic residues. The segment covering 191–204 (PMQTETGSQASGAS) has biased composition (polar residues).

As to expression, mailny observed in young seedlings and in emerging leaves.

Its function is as follows. Lineage-specific modulator of primary metabolism. Influences flowering time. This Arabidopsis thaliana (Mouse-ear cress) protein is Protein METABOLIC NETWORK MODULATOR 1.